The primary structure comprises 695 residues: MARPAKEHLKNLRNIGIMAHIDAGKTTTTERILYYSGRSHKIGEVHEGAATMDWMAQEQERGITITSAATTVFWKDAKINIIDTPGHVDFTIEVERSLRVLDGSVALFCSVSGVEPQSETVWRQADKYGVPRIAFVNKMDRMGADFFDAVKTMREKLHANAIPVQCPIGAEADFKGMVDLVKMRAYLFHDETLGADWDETDIPADLLEKCKKMRAELLEELATLDEDDENFMQKVLENPDSLTEDEINAAIRKGVCQNKFNPVLCGSAFKNKGVQQLLDAVVAWMPSPLDRGQIKAHDLNTDEEILLTPDDEQPLAALAFKIMTDPYVGRLTYIRIYSGTLTKGTSLLNTTKGGEERISRLLEMHANKREEKDEFHTGDIAACIGLKKATTGDTLCTSKRPILLEKMEFPEPVISMAIEPKSKGDREKLAMALSSLSIEDPTFRVTTDEETGQTIIAGMGELHLEILHDRMKREFNVEANVGKPQVAYKETITIPGSSQTKFVKQSGGRGQYAHVELEIRPNEKGKGNEVVSKIVGGVIPREYIAPTIKGIEEGLSTGVLAGFNLVDVLVDIVFGSYHDVDSNEMAFKICGSMALKEAARKCKPVILEPIMKVDVTTPEAHMGDVIGDLNRRRGQIVGQENHKGAVIIHAEVPLSEMFGYSTLLRSLSSGRATYVMEPSHFERVPSKIQEEIIKK.

The tr-type G domain occupies 10–289 (KNLRNIGIMA…AVVAWMPSPL (280 aa)). GTP contacts are provided by residues 19–26 (AHIDAGKT), 83–87 (DTPGH), and 137–140 (NKMD).

It belongs to the TRAFAC class translation factor GTPase superfamily. Classic translation factor GTPase family. EF-G/EF-2 subfamily.

The protein localises to the cytoplasm. Its function is as follows. Catalyzes the GTP-dependent ribosomal translocation step during translation elongation. During this step, the ribosome changes from the pre-translocational (PRE) to the post-translocational (POST) state as the newly formed A-site-bound peptidyl-tRNA and P-site-bound deacylated tRNA move to the P and E sites, respectively. Catalyzes the coordinated movement of the two tRNA molecules, the mRNA and conformational changes in the ribosome. This is Elongation factor G from Protochlamydia amoebophila (strain UWE25).